A 427-amino-acid chain; its full sequence is Glutamate-1-semialdehyde 2,1-aminomutase (427 aa).

An N6-(pyridoxal phosphate)lysine modification is found at lysine 268.

This sequence belongs to the class-III pyridoxal-phosphate-dependent aminotransferase family. HemL subfamily. It depends on pyridoxal 5'-phosphate as a cofactor.

The protein localises to the cytoplasm. The catalysed reaction is (S)-4-amino-5-oxopentanoate = 5-aminolevulinate. The protein operates within porphyrin-containing compound metabolism; protoporphyrin-IX biosynthesis; 5-aminolevulinate from L-glutamyl-tRNA(Glu): step 2/2. The chain is Glutamate-1-semialdehyde 2,1-aminomutase from Methanococcus maripaludis (strain DSM 14266 / JCM 13030 / NBRC 101832 / S2 / LL).